A 705-amino-acid chain; its full sequence is Elongation factor G (705 aa).

Positions 8-289 constitute a tr-type G domain; that stretch reads VNYRNIGISA…TVINYLPSPK (282 aa). Residues 17 to 24, 88 to 92, and 142 to 145 contribute to the GTP site; these read AHIDAGKT, DTPGH, and NKMD.

This sequence belongs to the TRAFAC class translation factor GTPase superfamily. Classic translation factor GTPase family. EF-G/EF-2 subfamily.

Its subcellular location is the cytoplasm. Functionally, catalyzes the GTP-dependent ribosomal translocation step during translation elongation. During this step, the ribosome changes from the pre-translocational (PRE) to the post-translocational (POST) state as the newly formed A-site-bound peptidyl-tRNA and P-site-bound deacylated tRNA move to the P and E sites, respectively. Catalyzes the coordinated movement of the two tRNA molecules, the mRNA and conformational changes in the ribosome. The sequence is that of Elongation factor G from Wigglesworthia glossinidia brevipalpis.